Here is a 268-residue protein sequence, read N- to C-terminus: Glutamine amidotransferase-like class 1 domain-containing protein 3, mitochondrial (268 aa).

The N-terminal 41 residues, 1–41, are a transit peptide targeting the mitochondrion; that stretch reads MAAVRVLVASRLAAASAFTSLSPGGRTPSQRAALHLSVPRP. N6-acetyllysine is present on residues Lys151, Lys157, and Lys164. Lys203 carries the N6-acetyllysine; alternate modification. Lys203 is subject to N6-succinyllysine; alternate. The residue at position 219 (Lys219) is an N6-acetyllysine. N6-acetyllysine; alternate is present on residues Lys223 and Lys233. Residues Lys223 and Lys233 each carry the N6-succinyllysine; alternate modification.

Belongs to the GATD3 family.

Its subcellular location is the mitochondrion. The protein is Glutamine amidotransferase-like class 1 domain-containing protein 3, mitochondrial of Homo sapiens (Human).